A 178-amino-acid polypeptide reads, in one-letter code: Mediator of RNA polymerase II transcription subunit 21 (178 aa).

Residues 36–91 (DDDDVNSYSNMAANAPLPQSQQQRQQQKKQQEPQQEIEQPQQQSNPESKSISPPKE) form a disordered region. A compositionally biased stretch (low complexity) spans 67–85 (EPQQEIEQPQQQSNPESKS). Positions 128–169 (NEQMNLINELSDKLQAIEEERIQKIKEKDNLLNLLESMIKEV) form a coiled coil.

Belongs to the Mediator complex subunit 21 family. As to quaternary structure, component of the Mediator complex.

It localises to the nucleus. In terms of biological role, component of the Mediator complex, a coactivator involved in the regulated transcription of nearly all RNA polymerase II-dependent genes. Mediator functions as a bridge to convey information from gene-specific regulatory proteins to the basal RNA polymerase II transcription machinery. Mediator is recruited to promoters by direct interactions with regulatory proteins and serves as a scaffold for the assembly of a functional preinitiation complex with RNA polymerase II and the general transcription factors. In Candida albicans (strain SC5314 / ATCC MYA-2876) (Yeast), this protein is Mediator of RNA polymerase II transcription subunit 21 (SRB7).